Reading from the N-terminus, the 471-residue chain is Pneumolysin (471 aa).

The next 4 membrane-spanning stretches (beta stranded) occupy residues 158 to 171, 178 to 187, 256 to 265, and 273 to 285; these read MEQL…DFEK, IDFNSVHSGE, SDEVEAAFEA, and APQT…LDNT. Positions 427-437 match the Conserved undecapeptide motif; it reads ECTGLAWEWWR. The short motif at 459–460 is the Cholesterol binding element; that stretch reads TL.

This sequence belongs to the cholesterol-dependent cytolysin family. Elongated monomers align along their lengths, indicating intersubunit contacts and suggesting the prepore structure. Modeling based on cryo-EM shows a homooligomeric pore complex containing 38-44 subunits; when inserted in the host membrane. The size of isolated pores is detergent-dependent; in amphipol A8-35 homogenous rings form with 42 subunits.

It is found in the secreted. It localises to the host cell membrane. With respect to regulation, erythrocytes hemolysis is inhibited by cholesterol. In terms of biological role, a cholesterol-dependent toxin that causes cytolysis by forming pores in cholesterol-containing host membranes. After binding to target membranes, the protein undergoes a major conformation change, leading to its insertion in the host membrane and formation of an oligomeric pore complex. Cholesterol is required for binding to host membranes, membrane insertion and pore formation; cholesterol binding is mediated by a Thr-Leu pair in the C-terminus. Can be reversibly inactivated by oxidation. The chain is Pneumolysin (ply) from Streptococcus pneumoniae serotype 2 (strain D39 / NCTC 7466).